Consider the following 402-residue polypeptide: Type II NADH:quinone oxidoreductase (402 aa).

FAD contacts are provided by residues 12–16 (GAGYA), 39–40 (NK), and V83. Residue E172 is part of the active site. Residues D302, 319 to 320 (AQ), and K379 each bind FAD.

Belongs to the NADH dehydrogenase family. Homodimer in solution. Forms homotetramers; dimer of dimers. Requires FAD as cofactor.

It is found in the cell membrane. It catalyses the reaction a quinone + NADH + H(+) = a quinol + NAD(+). The enzyme catalyses a menaquinone + NADH + H(+) = a menaquinol + NAD(+). The catalysed reaction is a ubiquinone + NADH + H(+) = a ubiquinol + NAD(+). Its activity is regulated as follows. Inhibited by HQNO, a quinone derivative. Functionally, alternative, nonproton pumping NADH:quinone oxidoreductase that delivers electrons to the respiratory chain by oxidation of NADH and reduction of quinones, and contributes to the regeneration of NAD(+). Can use DMN, a menaquinone analog, 2,3-dimethoxy-5,6-dimethyl-benzoquinone (DDB), an ubiquinone analog, or 2,3,5,6-tetramethyl-1,4-benzoquinone (Duroquinone, DQ) a plastoquinone analog as electron acceptors. This chain is Type II NADH:quinone oxidoreductase, found in Staphylococcus aureus (strain NCTC 8325 / PS 47).